The chain runs to 475 residues: MEEDESTTPKKKSDSQLNLPPSMNRPTVSLESRINRLIDSNHYHSPSKPIYSDRFIPSRSGSNFALFDLASSSPNKKDGKEDGAGSYASLLKTALFGPVTPEKSDVVNGFSPSGNIFRFKTETQRSLNLYPPFDSDVVSGVSPSPVKSPRKILRSPYKVLDAPALQDDFYLNLVDWSAQNVLAVGLGNCVYLWNACSSKVTKLCDLGVDETVCSVGWALRGTHLAIGTSSGTVQIWDVLRCKNIRTMEGHRLRVGALAWSSSVLSSGSRDKSILQRDIRTQEDHVSKLKGHKSEICGLKWSSDNRELASGGNDNKLFVWNQHSTQPVLRFCEHAAAVKAIAWSPHHFGLLASGGGTADRCIRFWNTTTNTHLNCVDTNSQVCNLVWSKNVNELVSTHGYSQNQIIVWKYPTMSKLATLTGHSYRVLYLAVSPDGQTIVTGAGDETLRFWNVFPSPKSQSRESEIGALSFGRTTIR.

Residues 1–27 (MEEDESTTPKKKSDSQLNLPPSMNRPT) are disordered. Over residues 15–27 (SQLNLPPSMNRPT) the composition is skewed to polar residues. WD repeat units follow at residues 166-203 (QDDF…VTKL), 207-246 (GVDE…NIRT), 249-289 (GHRL…SKLK), 290-329 (GHKS…PVLR), 332-374 (EHAA…HLNC), 376-417 (DTNS…KLAT), and 420-459 (GHSY…KSQS).

The protein belongs to the WD repeat CDC20/Fizzy family. In terms of assembly, associates with the APC/C complex. Interacts with CDC20-1, CDC20-2, CYCA1-1, CYCA1-2, CYCA3-4, CYCB1-1 and CYCB1-2. Binds to GIG1. Expressed in the root tip, predominantly in the root cap, quiescent center cells, surrounding stem cells and columella.

It is found in the nucleus. The protein operates within protein modification; protein ubiquitination. Activator protein that regulates the ubiquitin ligase activity and substrate specificity of the anaphase promoting complex/cyclosome (APC/C). Required for meristem organization and maintenance of quiescent center identity and stem cells. The polypeptide is Protein FIZZY-RELATED 1 (FZR1) (Arabidopsis thaliana (Mouse-ear cress)).